Consider the following 124-residue polypeptide: Small ribosomal subunit protein uS12 (124 aa).

A 3-methylthioaspartic acid modification is found at D89.

This sequence belongs to the universal ribosomal protein uS12 family. In terms of assembly, part of the 30S ribosomal subunit. Contacts proteins S8 and S17. May interact with IF1 in the 30S initiation complex.

Functionally, with S4 and S5 plays an important role in translational accuracy. In terms of biological role, interacts with and stabilizes bases of the 16S rRNA that are involved in tRNA selection in the A site and with the mRNA backbone. Located at the interface of the 30S and 50S subunits, it traverses the body of the 30S subunit contacting proteins on the other side and probably holding the rRNA structure together. The combined cluster of proteins S8, S12 and S17 appears to hold together the shoulder and platform of the 30S subunit. The polypeptide is Small ribosomal subunit protein uS12 (Campylobacter hominis (strain ATCC BAA-381 / DSM 21671 / CCUG 45161 / LMG 19568 / NCTC 13146 / CH001A)).